The chain runs to 336 residues: UDP-N-acetylenolpyruvoylglucosamine reductase (336 aa).

The 172-residue stretch at 17-188 (GFDVRARYAS…TAVTLRLSRD (172 aa)) folds into the FAD-binding PCMH-type domain. Residue R164 is part of the active site. S236 functions as the Proton donor in the catalytic mechanism. E332 is a catalytic residue.

The protein belongs to the MurB family. FAD serves as cofactor.

Its subcellular location is the cytoplasm. It catalyses the reaction UDP-N-acetyl-alpha-D-muramate + NADP(+) = UDP-N-acetyl-3-O-(1-carboxyvinyl)-alpha-D-glucosamine + NADPH + H(+). Its pathway is cell wall biogenesis; peptidoglycan biosynthesis. Cell wall formation. This Cupriavidus pinatubonensis (strain JMP 134 / LMG 1197) (Cupriavidus necator (strain JMP 134)) protein is UDP-N-acetylenolpyruvoylglucosamine reductase.